Consider the following 231-residue polypeptide: Cilia- and flagella-associated protein 299 (231 aa).

The protein localises to the cytoplasm. It localises to the nucleus. Its function is as follows. May be involved in spermatogenesis. The chain is Cilia- and flagella-associated protein 299 from Bos taurus (Bovine).